A 422-amino-acid polypeptide reads, in one-letter code: MKLYGLGVLVAIILYEKHGLAFQSGHVLSALPRTSRQVQLLQNLTTTYEVVLWQPVTAEFIEKKKEVHFFVNASDVNSVKAYLNASRIPFNVLMNNVEDLIQQQTSNDTVSPRASSSYYEQYHSLNEIYSWIEVITEQHPDMLQKIYIGSSYEKYPLYVLKVSGKEHRVKNAIWIDCGIHAREWISPAFCLWFIGYVTQFHGKENTYTRLLRHVDFYIMPVMNVDGYDYTWKKNRMWRKNRSVHMNNRCVGTDLNRNFASKHWCEKGASSFSCSETYCGLYPESEPEVKAVADFLRRNINHIKAYISMHSYSQQILFPYSYNRSKSKDHEELSLVASEAVRAIESINKNTRYTHGSGSESLYLAPGGSDDWIYDLGIKYSFTIELRDTGRYGFLLPERFIKPTCAEALAAVSKIAWHVIRNS.

A signal peptide spans 1-21; it reads MKLYGLGVLVAIILYEKHGLA. Residues 22–113 constitute a propeptide, activation peptide; sequence FQSGHVLSAL…QTSNDTVSPR (92 aa). 4 N-linked (GlcNAc...) asparagine glycosylation sites follow: N43, N72, N84, and N107. The Peptidase M14 domain maps to 121–418; it reads QYHSLNEIYS…AAVSKIAWHV (298 aa). An intrachain disulfide couples C177 to C190. Zn(2+) is bound by residues H180 and E183. Residues 180-183 and R238 contribute to the substrate site; that span reads HARE. An N-linked (GlcNAc...) asparagine glycan is attached at N240. Disulfide bonds link C249–C273 and C264–C278. Position 255–256 (255–256) interacts with substrate; the sequence is NR. Position 309 (H309) interacts with Zn(2+). Substrate is bound at residue 310-311; sequence SY. N322 carries N-linked (GlcNAc...) asparagine glycosylation. Residue Y362 coordinates substrate. E384 serves as the catalytic Proton donor/acceptor.

The protein belongs to the peptidase M14 family. Zn(2+) is required as a cofactor. Plasma; synthesized in the liver.

Its subcellular location is the secreted. It carries out the reaction Release of C-terminal Arg and Lys from a polypeptide.. TAFI/CPB2 is unique among carboxypeptidases in that it spontaneously inactivates with a short half-life, a property that is crucial for its role in controlling blood clot lysis. The zymogen is stabilized by interactions with the activation peptide. Release of the activation peptide increases a dynamic flap mobility and in time this leads to conformational changes that disrupt the catalytic site and expose a cryptic thrombin-cleavage site present at Arg-323. Cleaves C-terminal arginine or lysine residues from biologically active peptides such as kinins or anaphylatoxins in the circulation thereby regulating their activities. Down-regulates fibrinolysis by removing C-terminal lysine residues from fibrin that has already been partially degraded by plasmin. The chain is Carboxypeptidase B2 (Cpb2) from Rattus norvegicus (Rat).